Consider the following 53-residue polypeptide: Photoreceptor disk component PRCD (53 aa).

Cys-2 carries the S-palmitoyl cysteine lipid modification. A disordered region spans residues 24–53 (PEPSRVDGTVVGSGSDTDLQSTGREKGPVK). Polar residues predominate over residues 35-45 (GSGSDTDLQST).

Belongs to the PRCD family. In terms of assembly, interacts with RHO/rhodopsin; the interaction promotes PRCD stability. Post-translationally, palmitoylated at Cys-2. Palmitoylation is essential for protein stability and trafficking to the photoreceptor outer segment, but does not appear to be essential for membrane localization. Probably palmitoylated by ZDHHC3. In terms of processing, phosphorylated. In terms of tissue distribution, expressed in retina, where it localizes to both rod and cone photoreceptors (at protein level).

The protein resides in the cell projection. The protein localises to the cilium. It localises to the photoreceptor outer segment. Its subcellular location is the membrane. It is found in the endoplasmic reticulum. The protein resides in the golgi apparatus. In terms of biological role, involved in vision. The chain is Photoreceptor disk component PRCD from Mus musculus (Mouse).